Consider the following 291-residue polypeptide: GTP-binding protein RHO4 (291 aa).

Residues 14–31 are compositionally biased toward polar residues; it reads GNESNIVSQGSPSSSNLP. The interval 14–45 is disordered; sequence GNESNIVSQGSPSSSNLPESPGTLDEKNLPRL. 79 to 86 is a GTP binding site; that stretch reads GDGAVGKT. An Effector region motif is present at residues 101 to 109; the sequence is YIPTIFENY. GTP is bound by residues 127 to 131 and 185 to 188; these read DTAGQ and LKSD. Positions 250–273 are disordered; sequence THTIKNPFKRNTTRSDIDSSTGDT. 3 positions are modified to phosphoserine: serine 264, serine 268, and serine 276. A Cysteine methyl ester modification is found at cysteine 288. A lipid anchor (S-farnesyl cysteine) is attached at cysteine 288. Residues 289–291 constitute a propeptide, removed in mature form; sequence IIM.

The protein belongs to the small GTPase superfamily. Rho family. In terms of assembly, interacts with BEM4.

Its subcellular location is the cell membrane. The enzyme catalyses GTP + H2O = GDP + phosphate + H(+). In terms of biological role, plays an important role in cell growth. Required to keep the uninucleated state. May be involved in the organization of the cytoskeleton which affects microtubule functions. Most likely RHO3 and RHO4 of S.cerevisiae regulate partially overlapping but different pathways. The protein is GTP-binding protein RHO4 (RHO4) of Saccharomyces cerevisiae (strain ATCC 204508 / S288c) (Baker's yeast).